The chain runs to 101 residues: Interleukin-8 (101 aa).

Positions 1–22 (MTSKLAVALLAAFLLSAALCEG) are cleaved as a signal peptide. The residue at position 27 (arginine 27) is a Citrulline. Disulfide bonds link cysteine 34/cysteine 61 and cysteine 36/cysteine 77.

Belongs to the intercrine alpha (chemokine CxC) family. Homodimer. Interacts with TNFAIP6 (via Link domain); this interaction interferes with chemokine binding to glycosaminoglycans. Citrullination at Arg-27 prevents proteolysis, and dampens tissue inflammation, it also enhances leukocytosis, possibly through impaired chemokine clearance from the blood circulation.

It localises to the secreted. Chemotactic factor that mediates inflammatory response by attracting neutrophils, basophils, and T-cells to clear pathogens and protect the host from infection. Also plays an important role in neutrophil activation. Released in response to an inflammatory stimulus, exerts its effect by binding to the G-protein-coupled receptors CXCR1 and CXCR2, primarily found in neutrophils, monocytes and endothelial cells. G-protein heterotrimer (alpha, beta, gamma subunits) constitutively binds to CXCR1/CXCR2 receptor and activation by IL8 leads to beta and gamma subunits release from Galpha (GNAI2 in neutrophils) and activation of several downstream signaling pathways including PI3K and MAPK pathways. In Cercocebus atys (Sooty mangabey), this protein is Interleukin-8 (CXCL8).